The following is a 106-amino-acid chain: uncharacterized protein (106 aa).

2 helical membrane-spanning segments follow: residues 53–70 (LLLL…LDII) and 74–93 (ILGL…WTLI).

It localises to the cell membrane. This is an uncharacterized protein from Bacillus subtilis (strain 168).